Consider the following 492-residue polypeptide: 2-succinylbenzoate--CoA ligase (492 aa).

The protein belongs to the ATP-dependent AMP-binding enzyme family. MenE subfamily.

It carries out the reaction 2-succinylbenzoate + ATP + CoA = 2-succinylbenzoyl-CoA + AMP + diphosphate. It participates in quinol/quinone metabolism; 1,4-dihydroxy-2-naphthoate biosynthesis; 1,4-dihydroxy-2-naphthoate from chorismate: step 5/7. The protein operates within quinol/quinone metabolism; menaquinone biosynthesis. Its function is as follows. Converts 2-succinylbenzoate (OSB) to 2-succinylbenzoyl-CoA (OSB-CoA). The polypeptide is 2-succinylbenzoate--CoA ligase (Staphylococcus aureus (strain USA300 / TCH1516)).